A 198-amino-acid polypeptide reads, in one-letter code: Glycerol-3-phosphate acyltransferase (198 aa).

Helical transmembrane passes span 1-21 (MTIIIIVLSYFLGSIPTGFLF), 77-97 (HLFEVLAGISAVSGHIWPIWL), 111-131 (MFIALSWKVGFASLGIFLIIL), 136-156 (IVSLSSILAAFFLPLFMFLDI), and 157-177 (GVTNHPYFLISLVVSILVILK).

Belongs to the PlsY family. In terms of assembly, probably interacts with PlsX.

Its subcellular location is the cell inner membrane. The catalysed reaction is an acyl phosphate + sn-glycerol 3-phosphate = a 1-acyl-sn-glycero-3-phosphate + phosphate. Its pathway is lipid metabolism; phospholipid metabolism. In terms of biological role, catalyzes the transfer of an acyl group from acyl-phosphate (acyl-PO(4)) to glycerol-3-phosphate (G3P) to form lysophosphatidic acid (LPA). This enzyme utilizes acyl-phosphate as fatty acyl donor, but not acyl-CoA or acyl-ACP. The chain is Glycerol-3-phosphate acyltransferase from Prochlorococcus marinus (strain MIT 9515).